The chain runs to 106 residues: NADH dehydrogenase [ubiquinone] 1 beta subcomplex subunit 9 (106 aa).

Belongs to the complex I LYR family. In terms of assembly, complex I is composed of about 45 different subunits.

Its subcellular location is the mitochondrion inner membrane. In terms of biological role, accessory subunit of the mitochondrial membrane respiratory chain NADH dehydrogenase (Complex I), that is believed to be not involved in catalysis. Complex I functions in the transfer of electrons from NADH to the respiratory chain. The immediate electron acceptor for the enzyme is believed to be ubiquinone. This chain is NADH dehydrogenase [ubiquinone] 1 beta subcomplex subunit 9 (ndufb9), found in Dictyostelium discoideum (Social amoeba).